The sequence spans 164 residues: Diphosphoinositol polyphosphate phosphohydrolase 3-beta (164 aa).

Substrate-binding positions include Arg9, 17–19 (KKR), and 38–40 (SSR). The Nudix hydrolase domain maps to 17 to 144 (KKRAACLCFR…VHAEYLEKLK (128 aa)). Residues Gly49 and Glu65 each contribute to the Mg(2+) site. The Nudix box signature appears at 50–71 (GGMEPEEEPGGAAVREVYEEAG). Glu68 functions as the Proton acceptor in the catalytic mechanism. Glu69 provides a ligand contact to Mg(2+). Substrate-binding positions include 89–91 (RKH), Arg115, and Lys133. Positions 144–164 (KLGGSPTNGNSMAPSSPDSDP) are disordered. The span at 148–164 (SPTNGNSMAPSSPDSDP) shows a compositional bias: polar residues.

This sequence belongs to the Nudix hydrolase family. DIPP subfamily. Mg(2+) is required as a cofactor. The cofactor is Mn(2+). In terms of tissue distribution, mainly expressed in testis and, at lower level in brain. According to PubMed:12121577, it is also expressed in pancreas and weakly expressed in thymus, prostate, ovary, lung, small intestine and heart.

The protein localises to the cytoplasm. It carries out the reaction diphospho-myo-inositol polyphosphate + H2O = myo-inositol polyphosphate + phosphate.. The enzyme catalyses P(1),P(6)-bis(5'-adenosyl) hexaphosphate + H2O = adenosine 5'-pentaphosphate + AMP + 2 H(+). The catalysed reaction is P(1),P(5)-bis(5'-adenosyl) pentaphosphate + H2O = adenosine 5'-tetraphosphate + AMP + 2 H(+). Its function is as follows. Cleaves a beta-phosphate from the diphosphate groups in PP-InsP5 (diphosphoinositol pentakisphosphate), suggesting that it may play a role in signal transduction. Also able to catalyze the hydrolysis of dinucleoside oligophosphates, with Ap6A and Ap5A being the preferred substrates. The major reaction products are ADP and p4a from Ap6A and ADP and ATP from Ap5A. Also able to hydrolyze 5-phosphoribose 1-diphosphate. The chain is Diphosphoinositol polyphosphate phosphohydrolase 3-beta from Homo sapiens (Human).